A 156-amino-acid chain; its full sequence is Ribonuclease pancreatic (156 aa).

Residues 1-28 (MALEKSLALLPLLVLVLLVLGWVQPSLG) form the signal peptide. Positions 35 and 38 each coordinate substrate. Histidine 40 serves as the catalytic Proton acceptor. 4 disulfide bridges follow: cysteine 54-cysteine 112, cysteine 68-cysteine 123, cysteine 86-cysteine 138, and cysteine 93-cysteine 100. Asparagine 62 carries N-linked (GlcNAc...) asparagine glycosylation. 69–73 (KPVNT) lines the substrate pocket. Asparagine 90 carries N-linked (GlcNAc...) asparagine glycosylation. The substrate site is built by lysine 94 and arginine 113. Residue histidine 147 is the Proton donor of the active site.

Belongs to the pancreatic ribonuclease family. Monomer. Interacts with and forms tight 1:1 complexes with RNH1. Dimerization of two such complexes may occur. Interaction with RNH1 inhibits this protein.

It is found in the secreted. The catalysed reaction is an [RNA] containing cytidine + H2O = an [RNA]-3'-cytidine-3'-phosphate + a 5'-hydroxy-ribonucleotide-3'-[RNA].. It carries out the reaction an [RNA] containing uridine + H2O = an [RNA]-3'-uridine-3'-phosphate + a 5'-hydroxy-ribonucleotide-3'-[RNA].. Its function is as follows. Endonuclease that catalyzes the cleavage of RNA on the 3' side of pyrimidine nucleotides. Acts on single-stranded and double-stranded RNA. The chain is Ribonuclease pancreatic (RNASE1) from Lagothrix lagotricha (Brown woolly monkey).